The primary structure comprises 219 residues: Hemolysin-3 (219 aa).

Helical transmembrane passes span alanine 19–histidine 39, valine 49–leucine 69, isoleucine 83–isoleucine 103, threonine 112–valine 132, alanine 138–tyrosine 158, glycine 165–tryptophan 185, and isoleucine 194–valine 214.

This sequence belongs to the UPF0073 (Hly-III) family.

The protein localises to the cell membrane. In terms of biological role, might be virulent against a mammalian host; when expressed in E.coli, the soluble extract has hemolytic activity on human erythrocytes. The activity is not inhibited by cholesterol or activated by 2-mercaptoethanol. Might be pore-forming protein. Its in vivo role in virulence is untested, nor has it been shown to be secreted by B.cereus. The sequence is that of Hemolysin-3 from Bacillus cereus.